The primary structure comprises 337 residues: Casein kinase I isoform alpha (337 aa).

Position 2 is an N-acetylalanine (alanine 2). Residue serine 4 is modified to Phosphoserine. Lysine 8 is modified (N6-acetyllysine). In terms of domain architecture, Protein kinase spans 17–285; the sequence is YKLVRKIGSG…YLRQLFRILF (269 aa). ATP contacts are provided by residues 23 to 31 and lysine 46; that span reads IGSGSFGDI. The active-site Proton acceptor is the aspartate 136. Over residues 309–325 the composition is skewed to low complexity; sequence AASSSGQGQQAQTPTGK. Residues 309 to 337 are disordered; it reads AASSSGQGQQAQTPTGKQTDKTKSNMKGF.

It belongs to the protein kinase superfamily. CK1 Ser/Thr protein kinase family. Casein kinase I subfamily. As to quaternary structure, interacts with the Axin complex. Interacts with TUT1, leading to TUT1 phosphorylation. Interacts with FAM83A, FAM83B, FAM83C, FAM83D, FAM83E, FAM83F, FAM83G and FAM83H (via DUF1669). Interaction with FAM83H recruits CSNK1A1 to keratin filaments. Phosphorylated by MTOR in response to mitogenic stimulation, leading to its activation.

The protein localises to the cytoplasm. Its subcellular location is the cytoskeleton. It is found in the microtubule organizing center. It localises to the centrosome. The protein resides in the chromosome. The protein localises to the centromere. Its subcellular location is the kinetochore. It is found in the nucleus speckle. It localises to the cilium basal body. The protein resides in the spindle. It catalyses the reaction L-seryl-[protein] + ATP = O-phospho-L-seryl-[protein] + ADP + H(+). It carries out the reaction L-threonyl-[protein] + ATP = O-phospho-L-threonyl-[protein] + ADP + H(+). Casein kinases are operationally defined by their preferential utilization of acidic proteins such as caseins as substrates. Can phosphorylate a large number of proteins. Participates in Wnt signaling. Phosphorylates CTNNB1 at 'Ser-45'. May phosphorylate PER1 and PER2. May play a role in segregating chromosomes during mitosis. May play a role in keratin cytoskeleton disassembly and thereby, it may regulate epithelial cell migration. Acts as a positive regulator of mTORC1 and mTORC2 signaling in response to nutrients by mediating phosphorylation of DEPTOR inhibitor. Acts as an inhibitor of NLRP3 inflammasome assembly by mediating phosphorylation of NLRP3. The sequence is that of Casein kinase I isoform alpha (Csnk1a1) from Mus musculus (Mouse).